The chain runs to 643 residues: Threonine--tRNA ligase (643 aa).

In terms of domain architecture, TGS spans 1-61 (MIKITLKDGS…NEDSSLEICT (61 aa)). Residues 240 to 540 (DHNKLGRELG…LIEKYAGALP (301 aa)) are catalytic. Zn(2+)-binding residues include Cys335, His386, and His517.

It belongs to the class-II aminoacyl-tRNA synthetase family. Homodimer. Requires Zn(2+) as cofactor.

Its subcellular location is the cytoplasm. The enzyme catalyses tRNA(Thr) + L-threonine + ATP = L-threonyl-tRNA(Thr) + AMP + diphosphate + H(+). Functionally, catalyzes the attachment of threonine to tRNA(Thr) in a two-step reaction: L-threonine is first activated by ATP to form Thr-AMP and then transferred to the acceptor end of tRNA(Thr). Also edits incorrectly charged L-seryl-tRNA(Thr). This Clostridium perfringens (strain ATCC 13124 / DSM 756 / JCM 1290 / NCIMB 6125 / NCTC 8237 / Type A) protein is Threonine--tRNA ligase.